The chain runs to 692 residues: Transforming growth factor beta activator LRRC33 (692 aa).

The first 24 residues, 1 to 24 (MEFLPLWLCLGFHFLIVEWRSGRG), serve as a signal peptide directing secretion. At 25 to 650 (TATAASQGGC…CKWGQVDTGL (626 aa)) the chain is on the extracellular side. One can recognise an LRRNT domain in the interval 29–56 (ASQGGCKVVDRVADCRSLNLASVPSGLP). LRR repeat units lie at residues 58-79 (HSRM…SLQA), 82-103 (RLED…AFHE), 106-127 (HLQN…SATA), 133-155 (RLRR…MLQN), 158-179 (SLEV…VFEG), 182-203 (RLVE…AFDG), 206-227 (ELRR…SLTQ), 228-239 (LRFLNVSYNILE), 251-272 (ELEI…PQCG), and 273-294 (KLHT…YNTS). A glycan (N-linked (GlcNAc...) asparagine) is linked at asparagine 74. N-linked (GlcNAc...) asparagine glycosylation is present at asparagine 155. N-linked (GlcNAc...) asparagine glycosylation is present at asparagine 232. 3 N-linked (GlcNAc...) asparagine glycosylation sites follow: asparagine 292, asparagine 309, and asparagine 312. 11 LRR repeats span residues 329–350 (ALRF…FLKK), 353–374 (SLSH…EHEP), 377–398 (ALTE…PGLT), 403–424 (NLRV…LFHS), 427–448 (SITT…VPLD), 463–484 (SLRS…PFQG), 486–507 (SLTH…SPLS), 512–533 (TLQV…MDFS), 537–558 (NLRE…KGSS), 559–580 (ALQT…VVSE), and 585–605 (GLQT…EGWG). The N-linked (GlcNAc...) asparagine glycan is linked to asparagine 408. A glycan (N-linked (GlcNAc...) asparagine) is linked at asparagine 500. Positions 606–643 (ALQHFKTIADLSMVTCNLSSKIIRVVELPEGIPQDCKW) constitute an LRRCT domain. The N-linked (GlcNAc...) asparagine glycan is linked to asparagine 622. Residues 651 to 671 (FYLVLILPSCLTLLVASTVIF) traverse the membrane as a helical segment. Topologically, residues 672-692 (LTFKKPLLQVIKSRCHWSSIY) are cytoplasmic.

This sequence belongs to the LRRC32/LRRC33 family. Interacts (via LRR repeats) with TLR2, TLR3, TLR4, TLR9 and probably other Toll-like receptors. Interacts with CYBB/NOX2; the interaction is direct. Interacts with TGFB1; associates via disulfide bonds with the Latency-associated peptide chain (LAP) regulatory chain of TGFB1, leading to regulate activation of TGF-beta-1.

Its subcellular location is the cell membrane. It is found in the endoplasmic reticulum membrane. In terms of biological role, key regulator of transforming growth factor beta-1 (TGFB1) specifically required for microglia function in the nervous system. Required for activation of latent TGF-beta-1 in macrophages and microglia: associates specifically via disulfide bonds with the Latency-associated peptide (LAP), which is the regulatory chain of TGFB1, and regulates integrin-dependent activation of TGF-beta-1. TGF-beta-1 activation mediated by LRRC33/NRROS is highly localized: there is little spreading of TGF-beta-1 activated from one microglial cell to neighboring microglia, suggesting the existence of localized and selective activation of TGF-beta-1 by LRRC33/NRROS. Indirectly plays a role in Toll-like receptor (TLR) signaling: ability to inhibit TLR-mediated NF-kappa-B activation and cytokine production is probably a consequence of its role in TGF-beta-1 signaling. In Rattus norvegicus (Rat), this protein is Transforming growth factor beta activator LRRC33.